A 595-amino-acid polypeptide reads, in one-letter code: DNA damage-binding protein CMR1 (595 aa).

The segment at 20–79 (ALLDSLGLDPAGASSPFGSSPAPTSNKTKPKPKPAPKKRKAAAVIAVDEGPRRRSGRIAG) is disordered. Residues 29–46 (PAGASSPFGSSPAPTSNK) show a composition bias toward low complexity. Residues 47 to 60 (TKPKPKPAPKKRKA) show a composition bias toward basic residues. 4 WD repeats span residues 185-226 (VTNE…MEKP), 255-297 (HAKN…ELFS), 300-339 (DEDL…RESG), and 349-389 (GRGA…SISS). The segment at 397–429 (AIEEEEEGTSTLSGQSSSLPHDTHPTRESDYST) is disordered. Low complexity predominate over residues 405 to 415 (TSTLSGQSSSL). Basic and acidic residues predominate over residues 417-426 (HDTHPTRESD). 3 WD repeats span residues 448-487 (QHGK…SLVD), 519-556 (LRAQ…VGLW), and 558-595 (DDVT…GDHI).

This sequence belongs to the WD repeat DDB2/WDR76 family.

Its function is as follows. DNA-binding protein that binds to both single- and double-stranded DNA. Binds preferentially to UV-damaged DNA. May be involved in DNA-metabolic processes. The chain is DNA damage-binding protein CMR1 from Cryptococcus neoformans var. neoformans serotype D (strain B-3501A) (Filobasidiella neoformans).